The chain runs to 436 residues: Trigger factor (436 aa).

Positions 161–246 (DDQLNIDFVG…VNSVAEPKLP (86 aa)) constitute a PPIase FKBP-type domain.

The protein belongs to the FKBP-type PPIase family. Tig subfamily.

It is found in the cytoplasm. The enzyme catalyses [protein]-peptidylproline (omega=180) = [protein]-peptidylproline (omega=0). Involved in protein export. Acts as a chaperone by maintaining the newly synthesized protein in an open conformation. Functions as a peptidyl-prolyl cis-trans isomerase. This chain is Trigger factor, found in Pseudomonas aeruginosa (strain LESB58).